The primary structure comprises 234 residues: Ribitol-5-phosphate cytidylyltransferase (234 aa).

CTP contacts are provided by residues 7-10 (LAGG) and 79-85 (GSIVQKS).

This sequence belongs to the IspD/TarI cytidylyltransferase family. TarI subfamily.

It catalyses the reaction D-ribitol 5-phosphate + CTP + H(+) = CDP-L-ribitol + diphosphate. The protein operates within cell wall biogenesis; poly(ribitol phosphate) teichoic acid biosynthesis. Its function is as follows. Catalyzes the transfer of the cytidylyl group of CTP to D-ribitol 5-phosphate. The polypeptide is Ribitol-5-phosphate cytidylyltransferase (Lacticaseibacillus paracasei (strain ATCC 334 / BCRC 17002 / CCUG 31169 / CIP 107868 / KCTC 3260 / NRRL B-441) (Lactobacillus paracasei)).